Consider the following 240-residue polypeptide: Ribosomal RNA small subunit methyltransferase G (240 aa).

S-adenosyl-L-methionine is bound by residues Gly-80, Phe-85, 103 to 105 (DSS), 131 to 132 (AE), and Arg-150.

Belongs to the methyltransferase superfamily. RNA methyltransferase RsmG family.

It is found in the cytoplasm. Its function is as follows. Specifically methylates the N7 position of a guanine in 16S rRNA. The chain is Ribosomal RNA small subunit methyltransferase G from Thermoanaerobacter pseudethanolicus (strain ATCC 33223 / 39E) (Clostridium thermohydrosulfuricum).